A 681-amino-acid polypeptide reads, in one-letter code: UvrABC system protein B (681 aa).

A Helicase ATP-binding domain is found at 32–419 (ARLSRGERDV…GGEYVEQVIR (388 aa)). 45–52 (GATGTGKS) contributes to the ATP binding site. The Beta-hairpin signature appears at 98-121 (YYDYYQPEAYIAQTDTYIEKDSSI). The region spanning 436–602 (QIDDLIHEIK…PLRKKIADIL (167 aa)) is the Helicase C-terminal domain. Residues 607–616 (ESKAESTAPS) show a composition bias toward polar residues. The segment at 607–626 (ESKAESTAPSSDAVVVSKTN) is disordered. One can recognise a UVR domain in the interval 636–671 (RSLIDDLTTQMGTAARELKFELAGRLRDEIAELKKE).

Belongs to the UvrB family. In terms of assembly, forms a heterotetramer with UvrA during the search for lesions. Interacts with UvrC in an incision complex.

Its subcellular location is the cytoplasm. Functionally, the UvrABC repair system catalyzes the recognition and processing of DNA lesions. A damage recognition complex composed of 2 UvrA and 2 UvrB subunits scans DNA for abnormalities. Upon binding of the UvrA(2)B(2) complex to a putative damaged site, the DNA wraps around one UvrB monomer. DNA wrap is dependent on ATP binding by UvrB and probably causes local melting of the DNA helix, facilitating insertion of UvrB beta-hairpin between the DNA strands. Then UvrB probes one DNA strand for the presence of a lesion. If a lesion is found the UvrA subunits dissociate and the UvrB-DNA preincision complex is formed. This complex is subsequently bound by UvrC and the second UvrB is released. If no lesion is found, the DNA wraps around the other UvrB subunit that will check the other stand for damage. The sequence is that of UvrABC system protein B from Corynebacterium diphtheriae (strain ATCC 700971 / NCTC 13129 / Biotype gravis).